We begin with the raw amino-acid sequence, 313 residues long: Protein TIC 22-like, chloroplastic (313 aa).

Residues 1–96 (MNSNIFPPSK…RISDDGGGAR (96 aa)) constitute a chloroplast transit peptide.

It belongs to the Tic22 family.

It localises to the plastid. The protein resides in the chloroplast intermembrane space. Involved in protein precursor import into chloroplasts. The chain is Protein TIC 22-like, chloroplastic (TIC22L) from Arabidopsis thaliana (Mouse-ear cress).